The sequence spans 410 residues: Putative nickel insertion protein (410 aa).

It belongs to the LarC family.

The polypeptide is Putative nickel insertion protein (Cyanothece sp. (strain PCC 7425 / ATCC 29141)).